Reading from the N-terminus, the 171-residue chain is Antimicrobial protein CAP18 (171 aa).

The first 29 residues, Met1–Ala29, serve as a signal peptide directing secretion. 2 disulfide bridges follow: Cys85/Cys96 and Cys107/Cys124.

This sequence belongs to the cathelicidin family. In terms of tissue distribution, neutrophils.

The protein localises to the secreted. Functionally, CAP18 binds to the lipid A moiety of bacterial lipopolysaccharides (LPS), a glycolipid present in the outer membrane of all Gram-negative bacteria. Has antibiotic activity. The protein is Antimicrobial protein CAP18 (CAP18) of Oryctolagus cuniculus (Rabbit).